The following is a 300-amino-acid chain: Bifunctional protein FolD (300 aa).

NADP(+) contacts are provided by residues 168–170, Ser-193, and Ile-234; that span reads GRS.

It belongs to the tetrahydrofolate dehydrogenase/cyclohydrolase family. As to quaternary structure, homodimer.

The catalysed reaction is (6R)-5,10-methylene-5,6,7,8-tetrahydrofolate + NADP(+) = (6R)-5,10-methenyltetrahydrofolate + NADPH. The enzyme catalyses (6R)-5,10-methenyltetrahydrofolate + H2O = (6R)-10-formyltetrahydrofolate + H(+). It functions in the pathway one-carbon metabolism; tetrahydrofolate interconversion. Its function is as follows. Catalyzes the oxidation of 5,10-methylenetetrahydrofolate to 5,10-methenyltetrahydrofolate and then the hydrolysis of 5,10-methenyltetrahydrofolate to 10-formyltetrahydrofolate. The protein is Bifunctional protein FolD of Ehrlichia ruminantium (strain Welgevonden).